Here is a 137-residue protein sequence, read N- to C-terminus: Large ribosomal subunit protein uL16 (137 aa).

The interval 1–20 is disordered; the sequence is MLQPSNRKYRKDFKGRNRGV. Over residues 7–17 the composition is skewed to basic residues; sequence RKYRKDFKGRN.

Belongs to the universal ribosomal protein uL16 family. As to quaternary structure, part of the 50S ribosomal subunit.

Binds 23S rRNA and is also seen to make contacts with the A and possibly P site tRNAs. The sequence is that of Large ribosomal subunit protein uL16 from Coxiella burnetii (strain CbuK_Q154) (Coxiella burnetii (strain Q154)).